We begin with the raw amino-acid sequence, 150 residues long: Phosphoribosyl-AMP cyclohydrolase (150 aa).

Asp-93 contributes to the Mg(2+) binding site. Cys-94 lines the Zn(2+) pocket. Mg(2+) contacts are provided by Asp-95 and Asp-97. Zn(2+)-binding residues include Cys-112 and Cys-119.

This sequence belongs to the PRA-CH family. In terms of assembly, homodimer. It depends on Mg(2+) as a cofactor. Zn(2+) is required as a cofactor.

It is found in the cytoplasm. It catalyses the reaction 1-(5-phospho-beta-D-ribosyl)-5'-AMP + H2O = 1-(5-phospho-beta-D-ribosyl)-5-[(5-phospho-beta-D-ribosylamino)methylideneamino]imidazole-4-carboxamide. It participates in amino-acid biosynthesis; L-histidine biosynthesis; L-histidine from 5-phospho-alpha-D-ribose 1-diphosphate: step 3/9. Its function is as follows. Catalyzes the hydrolysis of the adenine ring of phosphoribosyl-AMP. This chain is Phosphoribosyl-AMP cyclohydrolase, found in Rhizobium etli (strain ATCC 51251 / DSM 11541 / JCM 21823 / NBRC 15573 / CFN 42).